The following is a 407-amino-acid chain: Peptidase T (407 aa).

His-82 is a binding site for Zn(2+). Asp-84 is an active-site residue. Asp-143 is a Zn(2+) binding site. The Proton acceptor role is filled by Glu-177. Glu-178, Asp-200, and His-382 together coordinate Zn(2+).

It belongs to the peptidase M20B family. Zn(2+) serves as cofactor.

Its subcellular location is the cytoplasm. It carries out the reaction Release of the N-terminal residue from a tripeptide.. Cleaves the N-terminal amino acid of tripeptides. The chain is Peptidase T from Streptococcus thermophilus (strain CNRZ 1066).